Consider the following 426-residue polypeptide: Glutamate-1-semialdehyde 2,1-aminomutase (426 aa).

N6-(pyridoxal phosphate)lysine is present on K265.

Belongs to the class-III pyridoxal-phosphate-dependent aminotransferase family. HemL subfamily. Homodimer. Pyridoxal 5'-phosphate serves as cofactor.

It is found in the cytoplasm. It catalyses the reaction (S)-4-amino-5-oxopentanoate = 5-aminolevulinate. It functions in the pathway porphyrin-containing compound metabolism; protoporphyrin-IX biosynthesis; 5-aminolevulinate from L-glutamyl-tRNA(Glu): step 2/2. This is Glutamate-1-semialdehyde 2,1-aminomutase from Sodalis glossinidius (strain morsitans).